A 1071-amino-acid polypeptide reads, in one-letter code: Fused isobutyryl-CoA mutase (1071 aa).

Residues 12–149 form the B12-binding domain; it reads PVRFVTSAAL…QTCDVDLTGE (138 aa). Residue His-25 participates in adenosylcob(III)alamin binding. The GTPase chaperone MeaI stretch occupies residues 153–400; sequence VEAVLAGERT…YQHLLELLGA (248 aa). 203 to 208 lines the GTP pocket; the sequence is GSGKSS. Residues Ser-207, Val-232, Asp-233, and Asp-246 each coordinate Mg(2+). Arg-249 contributes to the GTP binding site. Residues Glu-293 and Thr-294 each contribute to the Mg(2+) site. 340 to 343 contacts GTP; sequence NKFE. Residues 401–558 are linker; sequence RGLPVDEGVL…RSENLPGHFP (158 aa). Substrate contacts are provided by Phe-566, Arg-601, Arg-707, Tyr-751, Ser-800, Arg-835, and Lys-840. The GTP site is built by Glu-952 and Asn-1070.

It belongs to the IcmF family. As to quaternary structure, homodimer. It depends on adenosylcob(III)alamin as a cofactor. The cofactor is Mg(2+).

The enzyme catalyses 2-methylpropanoyl-CoA = butanoyl-CoA. It carries out the reaction GTP + H2O = GDP + phosphate + H(+). Its function is as follows. Catalyzes the reversible interconversion of isobutyryl-CoA and n-butyryl-CoA, using radical chemistry. Also exhibits GTPase activity, associated with its G-protein domain (MeaI) that functions as a chaperone that assists cofactor delivery and proper holo-enzyme assembly. Does not exhibit methylmalonyl-CoA mutase (MCM) activity. This is Fused isobutyryl-CoA mutase from Nocardia farcinica (strain IFM 10152).